The sequence spans 1084 residues: Cellulose synthase A catalytic subunit 2 [UDP-forming] (1084 aa).

Methionine 1 bears the N-acetylmethionine mark. Over 1 to 278 (MNTGGRLIAG…RSSRINPYRM (278 aa)) the chain is Cytoplasmic. Positions 39, 42, 58, 61, 66, 69, 81, and 84 each coordinate Zn(2+). The RING-type; degenerate zinc finger occupies 39–85 (CQICGDEIELTVSSELFVACNECAFPVCRPCYEYERREGNQACPQCK). A disordered region spans residues 230–259 (IKHEGGNNGRGSNDDDELDDPDMPMMDEGR). The chain crosses the membrane as a helical span at residues 279–299 (LILCRLAILGLFFHYRILHPV). Residues 300–301 (ND) are Extracellular-facing. A helical membrane pass occupies residues 302 to 322 (AYGLWLTSVICEIWFAVSWIL). At 323–867 (DQFPKWYPIE…INSVVYPWTS (545 aa)) the chain is on the cytoplasmic side. Residues serine 361, lysine 367, glutamate 368, and aspartate 397 each contribute to the UDP-alpha-D-glucose site. Residue aspartate 397 is part of the active site. Residues 451–477 (VRERRAMKRDYEEFKVKINALVATAQK) adopt a coiled-coil conformation. Lysine 538 lines the UDP-alpha-D-glucose pocket. Mn(2+) is bound by residues lysine 539 and aspartate 563. Aspartate 784 is an active-site residue. A helical transmembrane segment spans residues 868–888 (LPLIVYCSLPAVCLLTGKFIV). At 889-893 (PEISN) the chain is on the extracellular side. A helical transmembrane segment spans residues 894–914 (YAGILFMLMFISIAVTGILEM). Residues 915–929 (QWGGVGIDDWWRNEQ) are Cytoplasmic-facing. A helical transmembrane segment spans residues 930 to 950 (FWVIGGASSHLFALFQGLLKV). The Extracellular portion of the chain corresponds to 951 to 979 (LAGVNTNFTVTSKAADDGAFSELYIFKWT). N-linked (GlcNAc...) asparagine glycosylation is present at asparagine 957. The helical transmembrane segment at 980-1000 (TLLIPPTTLLIINIIGVIVGV) threads the bilayer. The Cytoplasmic portion of the chain corresponds to 1001–1011 (SDAISNGYDSW). The chain crosses the membrane as a helical span at residues 1012-1032 (GPLFGRLFFALWVIVHLYPFL). The Extracellular portion of the chain corresponds to 1033–1041 (KGMLGKQDK). The chain crosses the membrane as a helical span at residues 1042 to 1062 (MPTIIVVWSILLASILTLLWV). Residues 1063–1084 (RVNPFVAKGGPVLEICGLNCGN) are Cytoplasmic-facing.

The protein belongs to the glycosyltransferase 2 family. Plant cellulose synthase subfamily. As to quaternary structure, homodimer. Interaction through zinc finger domain. The cofactor is Mn(2+). It depends on Zn(2+) as a cofactor. As to expression, strongly and ubiquitously expressed. Localized in some dividing and expanding cells, as well as in vascular tissues.

The protein localises to the cell membrane. The enzyme catalyses [(1-&gt;4)-beta-D-glucosyl](n) + UDP-alpha-D-glucose = [(1-&gt;4)-beta-D-glucosyl](n+1) + UDP + H(+). It participates in glycan metabolism; plant cellulose biosynthesis. Its function is as follows. Catalytic subunit of cellulose synthase terminal complexes ('rosettes'), required for beta-1,4-glucan microfibril crystallization, a major mechanism of the cell wall formation. Involved in the primary cell wall formation. In Arabidopsis thaliana (Mouse-ear cress), this protein is Cellulose synthase A catalytic subunit 2 [UDP-forming].